Consider the following 409-residue polypeptide: Peptidase T (409 aa).

His78 contributes to the Zn(2+) binding site. Asp80 is an active-site residue. Asp140 lines the Zn(2+) pocket. Residue Glu174 is the Proton acceptor of the active site. Zn(2+)-binding residues include Glu175, Asp197, and His379.

Belongs to the peptidase M20B family. It depends on Zn(2+) as a cofactor.

The protein localises to the cytoplasm. It catalyses the reaction Release of the N-terminal residue from a tripeptide.. In terms of biological role, cleaves the N-terminal amino acid of tripeptides. In Vibrio parahaemolyticus serotype O3:K6 (strain RIMD 2210633), this protein is Peptidase T.